The sequence spans 134 residues: Small ribosomal subunit protein uS17c (134 aa).

The transit peptide at 1–37 (HHFFTGNGIGLNRFSNPISSPQTQTQTRSLPFPAIKA) directs the protein to the chloroplast. Residues 106 to 134 (FLAVPAPSRKSKKAGSSGELGIPLQSQQE) form a disordered region.

Belongs to the universal ribosomal protein uS17 family. As to quaternary structure, part of the 30S ribosomal subunit.

It is found in the plastid. The protein localises to the chloroplast. In terms of biological role, one of the primary rRNA binding proteins, it binds specifically to the 5'-end of 16S ribosomal RNA. This Pisum sativum (Garden pea) protein is Small ribosomal subunit protein uS17c (RPS17).